The chain runs to 119 residues: Large ribosomal subunit protein bL17 (119 aa).

It belongs to the bacterial ribosomal protein bL17 family. As to quaternary structure, part of the 50S ribosomal subunit. Contacts protein L32.

The polypeptide is Large ribosomal subunit protein bL17 (Acholeplasma laidlawii (strain PG-8A)).